Consider the following 1415-residue polypeptide: DNA-directed RNA polymerase subunit beta' (1415 aa).

The Zn(2+) site is built by C70, C72, C85, and C88. D461, D463, and D465 together coordinate Mg(2+). Zn(2+) is bound by residues C820, C894, C901, and C904.

It belongs to the RNA polymerase beta' chain family. The RNAP catalytic core consists of 2 alpha, 1 beta, 1 beta' and 1 omega subunit. When a sigma factor is associated with the core the holoenzyme is formed, which can initiate transcription. Requires Mg(2+) as cofactor. Zn(2+) serves as cofactor.

It catalyses the reaction RNA(n) + a ribonucleoside 5'-triphosphate = RNA(n+1) + diphosphate. In terms of biological role, DNA-dependent RNA polymerase catalyzes the transcription of DNA into RNA using the four ribonucleoside triphosphates as substrates. In Cupriavidus necator (strain ATCC 17699 / DSM 428 / KCTC 22496 / NCIMB 10442 / H16 / Stanier 337) (Ralstonia eutropha), this protein is DNA-directed RNA polymerase subunit beta'.